The following is a 145-amino-acid chain: D-aminoacyl-tRNA deacylase (145 aa).

Residues 137–138 (GP) carry the Gly-cisPro motif, important for rejection of L-amino acids motif.

Belongs to the DTD family. As to quaternary structure, homodimer.

It localises to the cytoplasm. It carries out the reaction glycyl-tRNA(Ala) + H2O = tRNA(Ala) + glycine + H(+). The catalysed reaction is a D-aminoacyl-tRNA + H2O = a tRNA + a D-alpha-amino acid + H(+). Functionally, an aminoacyl-tRNA editing enzyme that deacylates mischarged D-aminoacyl-tRNAs. Also deacylates mischarged glycyl-tRNA(Ala), protecting cells against glycine mischarging by AlaRS. Acts via tRNA-based rather than protein-based catalysis; rejects L-amino acids rather than detecting D-amino acids in the active site. By recycling D-aminoacyl-tRNA to D-amino acids and free tRNA molecules, this enzyme counteracts the toxicity associated with the formation of D-aminoacyl-tRNA entities in vivo and helps enforce protein L-homochirality. This chain is D-aminoacyl-tRNA deacylase, found in Alteromonas mediterranea (strain DSM 17117 / CIP 110805 / LMG 28347 / Deep ecotype).